Here is a 472-residue protein sequence, read N- to C-terminus: 3-isopropylmalate dehydratase large subunit (472 aa).

Cys-347, Cys-407, and Cys-410 together coordinate [4Fe-4S] cluster.

Belongs to the aconitase/IPM isomerase family. LeuC type 1 subfamily. Heterodimer of LeuC and LeuD. Requires [4Fe-4S] cluster as cofactor.

It catalyses the reaction (2R,3S)-3-isopropylmalate = (2S)-2-isopropylmalate. Its pathway is amino-acid biosynthesis; L-leucine biosynthesis; L-leucine from 3-methyl-2-oxobutanoate: step 2/4. In terms of biological role, catalyzes the isomerization between 2-isopropylmalate and 3-isopropylmalate, via the formation of 2-isopropylmaleate. This chain is 3-isopropylmalate dehydratase large subunit, found in Synechococcus sp. (strain WH7803).